The chain runs to 326 residues: Peroxidase 1 (326 aa).

A signal peptide spans 1–22 (MASSRVILALLLAAAAVMASSA). At Gln-23 the chain carries Pyrrolidone carboxylic acid. 4 cysteine pairs are disulfide-bonded: Cys-33/Cys-112, Cys-66/Cys-71, Cys-118/Cys-322, and Cys-196/Cys-231. His-64 acts as the Proton acceptor in catalysis. Ca(2+) contacts are provided by Asp-65, Val-68, Gly-70, Asp-72, and Ser-74. Asn-82 and Asn-153 each carry an N-linked (GlcNAc...) asparagine glycan. Pro-159 serves as a coordination point for substrate. The N-linked (GlcNAc...) asparagine glycan is linked to Asn-164. A heme b-binding site is contributed by His-189. Thr-190 is a binding site for Ca(2+). N-linked (GlcNAc...) asparagine glycans are attached at residues Asn-205 and Asn-237. The Ca(2+) site is built by Asp-244, Ser-247, and Asp-252.

This sequence belongs to the peroxidase family. Classical plant (class III) peroxidase subfamily. It depends on Ca(2+) as a cofactor. Requires heme b as cofactor.

It is found in the secreted. It catalyses the reaction 2 a phenolic donor + H2O2 = 2 a phenolic radical donor + 2 H2O. Removal of H(2)O(2), oxidation of toxic reductants, biosynthesis and degradation of lignin, suberization, auxin catabolism, response to environmental stresses such as wounding, pathogen attack and oxidative stress. These functions might be dependent on each isozyme/isoform in each plant tissue. In Oryza sativa subsp. japonica (Rice), this protein is Peroxidase 1 (PRX74).